Consider the following 149-residue polypeptide: SsrA-binding protein (149 aa).

It belongs to the SmpB family.

The protein resides in the cytoplasm. Its function is as follows. Required for rescue of stalled ribosomes mediated by trans-translation. Binds to transfer-messenger RNA (tmRNA), required for stable association of tmRNA with ribosomes. tmRNA and SmpB together mimic tRNA shape, replacing the anticodon stem-loop with SmpB. tmRNA is encoded by the ssrA gene; the 2 termini fold to resemble tRNA(Ala) and it encodes a 'tag peptide', a short internal open reading frame. During trans-translation Ala-aminoacylated tmRNA acts like a tRNA, entering the A-site of stalled ribosomes, displacing the stalled mRNA. The ribosome then switches to translate the ORF on the tmRNA; the nascent peptide is terminated with the 'tag peptide' encoded by the tmRNA and targeted for degradation. The ribosome is freed to recommence translation, which seems to be the essential function of trans-translation. The polypeptide is SsrA-binding protein (Carboxydothermus hydrogenoformans (strain ATCC BAA-161 / DSM 6008 / Z-2901)).